A 422-amino-acid polypeptide reads, in one-letter code: Putative polyketide beta-ketoacyl synthase 1 (422 aa).

Positions 2–416 (SRRVVVTGIG…GFQSAVVLTG (415 aa)) constitute a Ketosynthase family 3 (KS3) domain. Residues cysteine 169, histidine 309, and histidine 346 each act as for beta-ketoacyl synthase activity in the active site.

Belongs to the thiolase-like superfamily. Beta-ketoacyl-ACP synthases family.

Functionally, involved in developmentally regulated synthesis of a compound biosynthetically related to polyketide antibiotics which is essential for spore color in Streptomyces halstedii. This chain is Putative polyketide beta-ketoacyl synthase 1 (sch1), found in Streptomyces halstedii.